Here is a 2056-residue protein sequence, read N- to C-terminus: E3 ubiquitin-protein ligase TRIP12 (2056 aa).

Composition is skewed to polar residues over residues 1 to 10 and 18 to 27; these read MSSRPNNNPG and RNTAGAQPQE. The disordered stretch occupies residues 1–440; sequence MSSRPNNNPG…SGESESDDSE (440 aa). Residues 39 to 51 are compositionally biased toward basic and acidic residues; the sequence is AENKTHSLPESRK. 2 stretches are compositionally biased toward polar residues: residues 58–67 and 153–168; these read KVQSNTTSGP and SQEQPFPSASLPSTSK. Low complexity-rich tracts occupy residues 213–226 and 234–253; these read LSKLASKSATSAKA and SSSSASTSSSSSAVASVSAA. Polar residues-rich tracts occupy residues 317 to 327 and 363 to 375; these read PGSSKTETSKP and QKTTGSCASTSRR. Over residues 383–395 the composition is skewed to basic and acidic residues; that stretch reads AAAEARRQEKMAD. Over residues 415–433 the composition is skewed to low complexity; the sequence is GAAASSSVAGAVGMTTSGE. The region spanning 791-905 is the WWE domain; the sequence is MLKKGNAQNT…DPELAKSFIK (115 aa). The span at 1027–1042 shows a compositional bias: low complexity; it reads TTISTGSGTASGNSAA. Disordered regions lie at residues 1027-1147, 1465-1500, and 1632-1651; these read TTIS…ASKD, EEEESAKDTVGGKRGRAQTAPTKTSPRNSKKHDELW, and TNPEINQSDSQDSRVAPRLD. The span at 1069–1082 shows a compositional bias: basic residues; sequence KRKRLPKRGPRRPK. Basic and acidic residues predominate over residues 1085 to 1094; that stretch reads PPRDEDKVDN. Polar residues-rich tracts occupy residues 1095–1106 and 1119–1129; these read QAKSPTTTQSPK and RLSTQSNSNNI. Residues 1560–1634 are K-box; that stretch reads EIIPTSEFNN…AMQRLLDTNP (75 aa). In terms of domain architecture, HECT spans 1949 to 2056; that stretch reads PDHGYTHDSR…REGQQSFHLS (108 aa). Residue Cys2023 is the Glycyl thioester intermediate of the active site.

The protein belongs to the UPL family. K-HECT subfamily.

It localises to the nucleus. The protein resides in the nucleoplasm. The catalysed reaction is S-ubiquitinyl-[E2 ubiquitin-conjugating enzyme]-L-cysteine + [acceptor protein]-L-lysine = [E2 ubiquitin-conjugating enzyme]-L-cysteine + N(6)-ubiquitinyl-[acceptor protein]-L-lysine.. The protein operates within protein modification; protein ubiquitination. Functionally, E3 ubiquitin-protein ligase involved in ubiquitin fusion degradation (UFD) pathway and regulation of DNA repair. Part of the ubiquitin fusion degradation (UFD) pathway, a process that mediates ubiquitination of protein at their N-terminus, regardless of the presence of lysine residues in target proteins. Acts as a key regulator of DNA damage response by acting as a suppressor of RNF168, an E3 ubiquitin-protein ligase that promotes accumulation of 'Lys-63'-linked histone H2A and H2AX at DNA damage sites, thereby acting as a guard against excessive spreading of ubiquitinated chromatin at damaged chromosomes. In Xenopus tropicalis (Western clawed frog), this protein is E3 ubiquitin-protein ligase TRIP12 (trip12).